Reading from the N-terminus, the 550-residue chain is Protein UshA (550 aa).

The signal sequence occupies residues 1-25 (MRFSLSTTAAALAVSLAFAPGWAVA). Residues Asp-41, His-43, Asp-84, Asn-116, His-217, His-252, and Gln-254 each coordinate a divalent metal cation. A disulfide bridge connects residues Cys-258 and Cys-275. Substrate-binding positions include 375–379 (RSKVR) and 498–504 (FNALGGD).

The protein belongs to the 5'-nucleotidase family. The cofactor is Co(2+).

The protein localises to the periplasm. It catalyses the reaction UDP-sugar + H2O = UMP + alpha-D-aldose 1-phosphate.. The enzyme catalyses a ribonucleoside 5'-phosphate + H2O = a ribonucleoside + phosphate. Its function is as follows. Degradation of external UDP-glucose to uridine monophosphate and glucose-1-phosphate, which can then be used by the cell. The chain is Protein UshA (ushA) from Yersinia enterocolitica serotype O:8 / biotype 1B (strain NCTC 13174 / 8081).